The chain runs to 488 residues: Aspartyl/glutamyl-tRNA(Asn/Gln) amidotransferase subunit B (488 aa).

This sequence belongs to the GatB/GatE family. GatB subfamily. In terms of assembly, heterotrimer of A, B and C subunits.

It catalyses the reaction L-glutamyl-tRNA(Gln) + L-glutamine + ATP + H2O = L-glutaminyl-tRNA(Gln) + L-glutamate + ADP + phosphate + H(+). The catalysed reaction is L-aspartyl-tRNA(Asn) + L-glutamine + ATP + H2O = L-asparaginyl-tRNA(Asn) + L-glutamate + ADP + phosphate + 2 H(+). Allows the formation of correctly charged Asn-tRNA(Asn) or Gln-tRNA(Gln) through the transamidation of misacylated Asp-tRNA(Asn) or Glu-tRNA(Gln) in organisms which lack either or both of asparaginyl-tRNA or glutaminyl-tRNA synthetases. The reaction takes place in the presence of glutamine and ATP through an activated phospho-Asp-tRNA(Asn) or phospho-Glu-tRNA(Gln). This is Aspartyl/glutamyl-tRNA(Asn/Gln) amidotransferase subunit B from Neorickettsia sennetsu (strain ATCC VR-367 / Miyayama) (Ehrlichia sennetsu).